A 462-amino-acid chain; its full sequence is ATP-dependent protease ATPase subunit HslU (462 aa).

ATP contacts are provided by residues Ile21, Gly63 to Glu68, Asp275, Glu340, and Arg412.

This sequence belongs to the ClpX chaperone family. HslU subfamily. In terms of assembly, a double ring-shaped homohexamer of HslV is capped on each side by a ring-shaped HslU homohexamer. The assembly of the HslU/HslV complex is dependent on binding of ATP.

It is found in the cytoplasm. Functionally, ATPase subunit of a proteasome-like degradation complex; this subunit has chaperone activity. The binding of ATP and its subsequent hydrolysis by HslU are essential for unfolding of protein substrates subsequently hydrolyzed by HslV. HslU recognizes the N-terminal part of its protein substrates and unfolds these before they are guided to HslV for hydrolysis. This Pseudothermotoga lettingae (strain ATCC BAA-301 / DSM 14385 / NBRC 107922 / TMO) (Thermotoga lettingae) protein is ATP-dependent protease ATPase subunit HslU.